The following is a 444-amino-acid chain: Amino-acid acetyltransferase (444 aa).

Residues 295-434 (EKVRRANIND…QALYNYQRRS (140 aa)) form the N-acetyltransferase domain.

The protein belongs to the acetyltransferase family. ArgA subfamily. Homohexamer.

The protein resides in the cytoplasm. It catalyses the reaction L-glutamate + acetyl-CoA = N-acetyl-L-glutamate + CoA + H(+). The protein operates within amino-acid biosynthesis; L-arginine biosynthesis; N(2)-acetyl-L-ornithine from L-glutamate: step 1/4. This Proteus mirabilis (strain HI4320) protein is Amino-acid acetyltransferase.